The following is a 320-amino-acid chain: tRNA-cytidine(32) 2-sulfurtransferase (320 aa).

The short motif at 54–59 is the PP-loop motif element; that stretch reads SGGKDS. Residues Cys-129, Cys-132, and Cys-220 each contribute to the [4Fe-4S] cluster site.

This sequence belongs to the TtcA family. Homodimer. Mg(2+) is required as a cofactor. Requires [4Fe-4S] cluster as cofactor.

It is found in the cytoplasm. The catalysed reaction is cytidine(32) in tRNA + S-sulfanyl-L-cysteinyl-[cysteine desulfurase] + AH2 + ATP = 2-thiocytidine(32) in tRNA + L-cysteinyl-[cysteine desulfurase] + A + AMP + diphosphate + H(+). It participates in tRNA modification. Its function is as follows. Catalyzes the ATP-dependent 2-thiolation of cytidine in position 32 of tRNA, to form 2-thiocytidine (s(2)C32). The sulfur atoms are provided by the cysteine/cysteine desulfurase (IscS) system. In Bordetella pertussis (strain Tohama I / ATCC BAA-589 / NCTC 13251), this protein is tRNA-cytidine(32) 2-sulfurtransferase.